The sequence spans 365 residues: tRNA 2-selenouridine synthase (365 aa).

In terms of domain architecture, Rhodanese spans 16 to 138 (FLLKTPLIDL…LRRYLINVID (123 aa)). Cys-98 (S-selanylcysteine intermediate) is an active-site residue.

Belongs to the SelU family. In terms of assembly, monomer.

The catalysed reaction is 5-methylaminomethyl-2-thiouridine(34) in tRNA + selenophosphate + (2E)-geranyl diphosphate + H2O + H(+) = 5-methylaminomethyl-2-selenouridine(34) in tRNA + (2E)-thiogeraniol + phosphate + diphosphate. It catalyses the reaction 5-methylaminomethyl-2-thiouridine(34) in tRNA + (2E)-geranyl diphosphate = 5-methylaminomethyl-S-(2E)-geranyl-thiouridine(34) in tRNA + diphosphate. It carries out the reaction 5-methylaminomethyl-S-(2E)-geranyl-thiouridine(34) in tRNA + selenophosphate + H(+) = 5-methylaminomethyl-2-(Se-phospho)selenouridine(34) in tRNA + (2E)-thiogeraniol. The enzyme catalyses 5-methylaminomethyl-2-(Se-phospho)selenouridine(34) in tRNA + H2O = 5-methylaminomethyl-2-selenouridine(34) in tRNA + phosphate. Functionally, involved in the post-transcriptional modification of the uridine at the wobble position (U34) of tRNA(Lys), tRNA(Glu) and tRNA(Gln). Catalyzes the conversion of 2-thiouridine (S2U-RNA) to 2-selenouridine (Se2U-RNA). Acts in a two-step process involving geranylation of 2-thiouridine (S2U) to S-geranyl-2-thiouridine (geS2U) and subsequent selenation of the latter derivative to 2-selenouridine (Se2U) in the tRNA chain. The protein is tRNA 2-selenouridine synthase of Psychromonas ingrahamii (strain DSM 17664 / CCUG 51855 / 37).